Here is a 928-residue protein sequence, read N- to C-terminus: DNA polymerase I (928 aa).

A 5'-3' exonuclease domain is found at 1-323 (MVQIPENPLI…IDESPSEPAA (323 aa)). One can recognise a 3'-5' exonuclease domain in the interval 324 to 517 (ALSYENYVTI…LHLKMWPELQ (194 aa)). Residues 324–928 (ALSYENYVTI…GSGENWDQAH (605 aa)) form a klenow fragment region. The interval 521–928 (GPLNVFENIE…GSGENWDQAH (408 aa)) is polymerase.

This sequence belongs to the DNA polymerase type-A family. In terms of assembly, single-chain monomer with multiple functions.

The catalysed reaction is DNA(n) + a 2'-deoxyribonucleoside 5'-triphosphate = DNA(n+1) + diphosphate. Its function is as follows. In addition to polymerase activity, this DNA polymerase exhibits 3'-5' and 5'-3' exonuclease activity. It is able to utilize nicked circular duplex DNA as a template and can unwind the parental DNA strand from its template. The chain is DNA polymerase I (polA) from Salmonella typhimurium (strain LT2 / SGSC1412 / ATCC 700720).